A 148-amino-acid polypeptide reads, in one-letter code: Endoribonuclease YbeY (148 aa).

Residues His-113, His-117, and His-123 each contribute to the Zn(2+) site.

The protein belongs to the endoribonuclease YbeY family. Zn(2+) is required as a cofactor.

Its subcellular location is the cytoplasm. Single strand-specific metallo-endoribonuclease involved in late-stage 70S ribosome quality control and in maturation of the 3' terminus of the 16S rRNA. The chain is Endoribonuclease YbeY from Borrelia hermsii (strain HS1 / DAH).